Reading from the N-terminus, the 510-residue chain is Alpha-L-arabinofuranosidase B (510 aa).

The N-terminal stretch at 1-24 (MTMSRSSRSSVLALALATGSLVAA) is a signal peptide. The tract at residues 25 to 342 (GPCDIYSSGG…ADIVAAKYAT (318 aa)) is catalytic. Cystine bridges form between cysteine 27-cysteine 37, cysteine 87-cysteine 92, and cysteine 182-cysteine 183. Asparagine 89 carries an N-linked (GlcNAc...) asparagine glycan. Residue aspartate 225 coordinates substrate. Glutamate 227 (nucleophile) is an active-site residue. Substrate contacts are provided by asparagine 228 and glycine 303. The active-site Proton donor is aspartate 304. The interval 343–510 (TSLISGPALT…VSWVVADGFA (168 aa)) is ABD. An intrachain disulfide couples cysteine 412 to cysteine 450. Substrate-binding residues include histidine 427, asparagine 429, phenylalanine 430, aspartate 446, histidine 475, glutamate 477, leucine 480, and aspartate 500.

This sequence belongs to the glycosyl hydrolase 54 family.

The protein localises to the secreted. It catalyses the reaction Hydrolysis of terminal non-reducing alpha-L-arabinofuranoside residues in alpha-L-arabinosides.. The protein operates within glycan metabolism; L-arabinan degradation. Alpha-L-arabinofuranosidase involved in the degradation of arabinoxylan, a major component of plant hemicellulose. Able to hydrolyze 1,5-, 1,3- and 1,2-alpha-linkages not only in L-arabinofuranosyl oligosaccharides, but also in polysaccharides containing terminal non-reducing L-arabinofuranoses in side chains, like L-arabinan, arabinogalactan and arabinoxylan. The sequence is that of Alpha-L-arabinofuranosidase B (abfB) from Emericella nidulans (strain FGSC A4 / ATCC 38163 / CBS 112.46 / NRRL 194 / M139) (Aspergillus nidulans).